The sequence spans 247 residues: ATP synthase subunit a, chloroplastic (247 aa).

The next 5 helical transmembrane spans lie at 38-58 (QVLI…LIAV), 95-115 (VPFI…GALL), 134-154 (INTT…AGLS), 199-219 (LVVV…VMFL), and 220-240 (GLFT…AYIG).

The protein belongs to the ATPase A chain family. F-type ATPases have 2 components, CF(1) - the catalytic core - and CF(0) - the membrane proton channel. CF(1) has five subunits: alpha(3), beta(3), gamma(1), delta(1), epsilon(1). CF(0) has four main subunits: a, b, b' and c.

The protein localises to the plastid. The protein resides in the chloroplast thylakoid membrane. Key component of the proton channel; it plays a direct role in the translocation of protons across the membrane. The protein is ATP synthase subunit a, chloroplastic of Brachypodium distachyon (Purple false brome).